The chain runs to 554 residues: Bifunctional epoxide hydrolase 2 (554 aa).

A phosphatase region spans residues 1 to 224 (MALRVAAFDL…KVTGTQFPEA (224 aa)). Residues D9 and D11 each coordinate Mg(2+). Position 55 is an N6-succinyllysine (K55). 123-124 (TN) contributes to the phosphate binding site. At K176 the chain carries N6-acetyllysine; alternate. K176 carries the N6-succinyllysine; alternate modification. D185 is a binding site for Mg(2+). An N6-acetyllysine mark is found at K191 and K215. The tract at residues 233–554 (NDVSHGYVTV…VQNPSVTSKI (322 aa)) is epoxide hydrolase. The AB hydrolase-1 domain occupies 257-530 (PALCLCHGFP…CGHWTQIEKP (274 aa)). The active-site Nucleophile is the D333. S368 is modified (phosphoserine). K371 bears the N6-succinyllysine mark. Residue Y381 participates in substrate binding. N6-succinyllysine is present on residues K420 and K454. The active-site Proton donor is Y465. K504 carries the post-translational modification N6-succinyllysine. Residue K508 is modified to N6-acetyllysine; alternate. Position 508 is an N6-succinyllysine; alternate (K508). C521 is lipidated: S-(15-deoxy-Delta12,14-prostaglandin J2-9-yl)cysteine. H523 functions as the Proton acceptor in the catalytic mechanism. The Microbody targeting signal signature appears at 552 to 554 (SKI). Position 553 is an N6-succinyllysine (K553).

Belongs to the AB hydrolase superfamily. Epoxide hydrolase family. Homodimer. Requires Mg(2+) as cofactor. The N-terminus is blocked. Post-translationally, the covalent modification of cysteine by 15-deoxy-Delta12,14-prostaglandin-J2 is autocatalytic and reversible. It may occur as an alternative to other cysteine modifications, such as S-nitrosylation and S-palmitoylation. As to expression, detected in liver, intestine, ovary and kidney. Detected at low levels in heart and muscle.

It localises to the cytoplasm. The protein localises to the peroxisome. It catalyses the reaction an epoxide + H2O = an ethanediol. The enzyme catalyses (9S,10S)-10-hydroxy-9-(phosphooxy)octadecanoate + H2O = (9S,10S)-9,10-dihydroxyoctadecanoate + phosphate. It carries out the reaction 8-hydroxy-(11S,12S)-epoxy-(5Z,9E,14Z)-eicosatrienoate + H2O = (8,11R,12S)-trihydroxy-(5Z,9E,14Z)-eicosatrienoate. The catalysed reaction is 10-hydroxy-(11S,12S)-epoxy- (5Z,8Z,14Z)-eicosatrienoate + H2O = (10,11S,12R)-trihydroxy-(5Z,8Z,14Z)-eicosatrienoate. It catalyses the reaction (8S,9R)-epoxy-(5Z,11Z,14Z)-eicosatrienoate + H2O = (8S,9S)-dihydroxy-(5Z,11Z,14Z)-eicosatrienoate. The enzyme catalyses (11S,12R)-epoxy-(5Z,8Z,14Z)-eicosatrienoate + H2O = (11R,12R)-dihydroxy-(5Z,8Z,14Z)-eicosatrienoate. It carries out the reaction (11S,12R)-epoxy-(5Z,8Z,14Z)-eicosatrienoate + H2O = (11S,12S)-dihydroxy-(5Z,8Z,14Z)-eicosatrienoate. The catalysed reaction is (14S,15R)-epoxy-(5Z,8Z,11Z)-eicosatrienoate + H2O = (14R,15R)-dihydroxy-(5Z,8Z,11Z)-eicosatrienoate. It catalyses the reaction (14S,15R)-epoxy-(5Z,8Z,11Z)-eicosatrienoate + H2O = (14S,15S)-dihydroxy-(5Z,8Z,11Z)-eicosatrienoate. The enzyme catalyses (11R,12S)-epoxy-(5Z,8Z,14Z)-eicosatrienoate + H2O = (11S,12S)-dihydroxy-(5Z,8Z,14Z)-eicosatrienoate. It carries out the reaction (11R,12S)-epoxy-(5Z,8Z,14Z)-eicosatrienoate + H2O = (11R,12R)-dihydroxy-(5Z,8Z,14Z)-eicosatrienoate. The catalysed reaction is (8S,9R)-epoxy-(5Z,11Z,14Z)-eicosatrienoate + H2O = (8R,9R)-dihydroxy-(5Z,11Z,14Z)-eicosatrienoate. It catalyses the reaction 12-phosphooxy-(9Z)-octadecenoate + H2O = 12-hydroxy-(9Z)-octadecenoate + phosphate. The enzyme catalyses 12-phosphooxy-(9E)-octadecenoate + H2O = 12-hydroxy-(9E)-octadecenoate + phosphate. It carries out the reaction 12-(phosphooxy)octadecanoate + H2O = 12-hydroxyoctadecanoate + phosphate. The catalysed reaction is 8,9-epoxy-(5Z,11Z,14Z)-eicosatrienoate + H2O = 8,9-dihydroxy-(5Z,11Z,14Z)-eicosatrienoate. It catalyses the reaction 11,12-epoxy-(5Z,8Z,14Z)-eicosatrienoate + H2O = 11,12-dihydroxy-(5Z,8Z,14Z)-eicosatrienoate. The enzyme catalyses 14,15-epoxy-(5Z,8Z,11Z)-eicosatrienoate + H2O = 14,15-dihydroxy-(5Z,8Z,11Z)-eicosatrienoate. It carries out the reaction 9,10-epoxy-(12Z)-octadecenoate + H2O = 9,10-dihydroxy-(12Z)-octadecenoate. The catalysed reaction is 1-tetradecanoyl-sn-glycerol 3-phosphate + H2O = 1-tetradecanoyl-sn-glycerol + phosphate. It catalyses the reaction 1-octadecanoyl-sn-glycero-3-phosphate + H2O = 1-octadecanoyl-sn-glycerol + phosphate. The enzyme catalyses 1-(5Z,8Z,11Z,14Z-eicosatetraenoyl)-sn-glycero-3-phosphate + H2O = 1-(5Z,8Z,11Z,14Z-eicosatetraenoyl)-sn-glycerol + phosphate. It carries out the reaction 1-hexadecanoyl-sn-glycero-3-phosphate + H2O = 1-hexadecanoyl-sn-glycerol + phosphate. The catalysed reaction is 1-(9Z-octadecenoyl)-sn-glycero-3-phosphate + H2O = 1-(9Z-octadecenoyl)-sn-glycerol + phosphate. It catalyses the reaction (14R,15S)-epoxy-(5Z,8Z,11Z)-eicosatrienoate + H2O = (14R,15R)-dihydroxy-(5Z,8Z,11Z)-eicosatrienoate. With respect to regulation, inhibited by 1-(1-acetylpiperidin-4-yl)-3-(4-(trifl uoromethoxy)phenyl)urea (TPAU), 1-cyclohexyl-3-dodecylurea (CDU), 12-(3-adamantan-1-yl-ureido)-dodecanoic acid (AUDA), 1-((3S, 5S, 7S)-adamantan-1-yl)-3-(5-(2-(2-ethoxyethoxy) ethoxy)pentyl)urea (AEPU), N-adamantyl-N[']-cyclohexyl urea (ACU), 4-(((1S, 4S)-4-(3-((3S, 5S, 7S)-adamantan-1-yl) ureido)cyclohexyl)oxy)benzoic acid (c-AUCB), 4-(((1R, 4R)-4-(3-((3S, 5S, 7S)-adamantan-1-yl)ureido)cyclohexyl)oxy)benzoic acid (t-AUCB), 4-(((1R, 4R)-4-(3-(4(trifluoromethoxy)phenyl)ureido)cyclohexyl)oxy)benzoic acid (t-TAUCB) and to a lesser extent by 8-(3-((3S, 5S, 7S)-adamantan-1-yl)ureido) octanoic acid (AUOA). Phosphatase activity is inhibited by dodecyl-phosphate, phospholipids such as phospho-lysophosphatidic acids and fatty acids such as palmitic acid and lauric acid. Bifunctional enzyme. The C-terminal domain has epoxide hydrolase activity and acts on epoxides (alkene oxides, oxiranes) and arene oxides. Plays a role in xenobiotic metabolism by degrading potentially toxic epoxides. Also determines steady-state levels of physiological mediators. In terms of biological role, bifunctional enzyme. The N-terminal domain has lipid phosphatase activity, with the highest activity towards threo-9,10-phosphonooxy-hydroxy-octadecanoic acid, followed by erythro-9,10-phosphonooxy-hydroxy-octadecanoic acid, 12-phosphonooxy-octadec-9Z-enoic acid and 12-phosphonooxy-octadec-9E-enoic acid. Has phosphatase activity toward lyso-glycerophospholipids with also some lower activity toward lysolipids of sphingolipid and isoprenoid phosphates. The protein is Bifunctional epoxide hydrolase 2 of Mus musculus (Mouse).